A 158-amino-acid polypeptide reads, in one-letter code: SsrA-binding protein (158 aa).

It belongs to the SmpB family.

It localises to the cytoplasm. Its function is as follows. Required for rescue of stalled ribosomes mediated by trans-translation. Binds to transfer-messenger RNA (tmRNA), required for stable association of tmRNA with ribosomes. tmRNA and SmpB together mimic tRNA shape, replacing the anticodon stem-loop with SmpB. tmRNA is encoded by the ssrA gene; the 2 termini fold to resemble tRNA(Ala) and it encodes a 'tag peptide', a short internal open reading frame. During trans-translation Ala-aminoacylated tmRNA acts like a tRNA, entering the A-site of stalled ribosomes, displacing the stalled mRNA. The ribosome then switches to translate the ORF on the tmRNA; the nascent peptide is terminated with the 'tag peptide' encoded by the tmRNA and targeted for degradation. The ribosome is freed to recommence translation, which seems to be the essential function of trans-translation. The protein is SsrA-binding protein of Roseiflexus castenholzii (strain DSM 13941 / HLO8).